The sequence spans 1129 residues: Kinesin-like protein KIP1 (1129 aa).

Residues 1–49 (MLEQAEKLMKRNSSGAMSAPQSKPLARSRSSTMPTTTQKRVRSSQQSEG) form a disordered region. Composition is skewed to polar residues over residues 11 to 21 (RNSSGAMSAPQ) and 28 to 48 (SRSS…QQSE). The 364-residue stretch at 54–417 (NIKVYVRCRS…LEYATRAKSI (364 aa)) folds into the Kinesin motor domain. 139 to 146 (GQTGTGKT) contributes to the ATP binding site. 3 coiled-coil regions span residues 422–513 (QVNQ…ELDV), 681–765 (LEKE…QKIV), and 919–948 (DDQR…TLVN).

Belongs to the TRAFAC class myosin-kinesin ATPase superfamily. Kinesin family. BimC subfamily.

It is found in the cytoplasm. It localises to the cytoskeleton. Its subcellular location is the spindle. Functionally, required for assembly of the mitotic spindle. Interacts with spindle microtubules to produce an outwardly directed force acting upon the poles. Following spindle assembly, CIN8 and KIP1 apparently act to oppose a force that draws separated poles back together. This force seems to be mediate by KAR3. In Eremothecium gossypii (strain ATCC 10895 / CBS 109.51 / FGSC 9923 / NRRL Y-1056) (Yeast), this protein is Kinesin-like protein KIP1 (KIP1).